A 382-amino-acid polypeptide reads, in one-letter code: Galactokinase (382 aa).

34-37 contributes to the substrate binding site; that stretch reads EHTD. Residue 124–130 coordinates ATP; the sequence is GAGLSSS. Mg(2+)-binding residues include Ser-130 and Glu-162. Residue Asp-174 is the Proton acceptor of the active site. Tyr-223 provides a ligand contact to substrate.

This sequence belongs to the GHMP kinase family. GalK subfamily.

The protein localises to the cytoplasm. It carries out the reaction alpha-D-galactose + ATP = alpha-D-galactose 1-phosphate + ADP + H(+). Its pathway is carbohydrate metabolism; galactose metabolism. Catalyzes the transfer of the gamma-phosphate of ATP to D-galactose to form alpha-D-galactose-1-phosphate (Gal-1-P). The chain is Galactokinase from Escherichia coli O157:H7 (strain EC4115 / EHEC).